The following is a 440-amino-acid chain: Serine/threonine-protein kinase 2 (440 aa).

Positions 85-440 (NDDFYHISTG…FSNWINGESC (356 aa)) constitute a Protein kinase domain. ATP is bound by residues 91–99 (ISTGGYGIV) and Lys-115. The active-site Proton acceptor is Asp-306.

The protein belongs to the protein kinase superfamily. Ser/Thr protein kinase family. Poxviruses subfamily. Post-translationally, phosphorylated in vivo. Autophosphorylated in vitro.

The protein resides in the host endoplasmic reticulum. Its subcellular location is the host endoplasmic reticulum-Golgi intermediate compartment. It carries out the reaction L-seryl-[protein] + ATP = O-phospho-L-seryl-[protein] + ADP + H(+). The catalysed reaction is L-threonyl-[protein] + ATP = O-phospho-L-threonyl-[protein] + ADP + H(+). Its function is as follows. Essential serine-protein kinase involved in the early stage of virion morphogenesis. In Sus scrofa (Pig), this protein is Serine/threonine-protein kinase 2 (OPG054).